Reading from the N-terminus, the 84-residue chain is Esculentin-1SIa (84 aa).

The first 22 residues, 1–22 (MFTLKKPLLLIVLLGIISLSLC), serve as a signal peptide directing secretion. Positions 23–36 (EQERAADEDEGSEI) are cleaved as a propeptide — removed in mature form. C78 and C84 are oxidised to a cystine.

Expressed by the skin glands.

The protein localises to the secreted. Its function is as follows. Has antimicrobial activity against Gram-negative bacterium E.coli ATCC 8739 (MIC=6.3 ug), against Gram positive bacteria S.aureus ATCC 6538 (MIC=3.1 ug), methicillin-resistant S.aureus ATCC 43300 (MIC=25 ug) and B.subtilis ATCC 6633 (MIC=25 ug). Has no activity against fungus C.albicans ATCC 90028. This chain is Esculentin-1SIa, found in Odorrana ishikawae (Ishikawa's frog).